A 489-amino-acid polypeptide reads, in one-letter code: uncharacterized protein (489 aa).

The next 13 helical transmembrane spans lie at 1–21 (MNAA…LGIR), 40–60 (FGTV…FTFL), 74–94 (FYII…LPAV), 117–137 (PLLG…YLVL), 158–178 (AAIW…GIHG), 188–208 (IMIL…YYGG), 234–254 (AWFS…PHTF), 271–291 (IIMP…FAAI), 318–338 (FVGI…SMIL), 362–382 (VSAL…YFTF), 388–408 (IVTL…ALLF), 422–442 (FAGI…ETTI), and 456–476 (LNVG…VSLM).

It belongs to the sodium:solute symporter (SSF) (TC 2.A.21) family.

The protein resides in the cell membrane. This is an uncharacterized protein from Bacillus subtilis (strain 168).